The sequence spans 436 residues: Phosphomethylpyrimidine synthase (436 aa).

Residues N69, M98, Y127, H163, 185–187 (SRG), 226–229 (DACR), and E265 each bind substrate. H269 contributes to the Zn(2+) binding site. Residue Y292 coordinates substrate. Zn(2+) is bound at residue H333. C409, C412, and C416 together coordinate [4Fe-4S] cluster.

It belongs to the ThiC family. The cofactor is [4Fe-4S] cluster.

The enzyme catalyses 5-amino-1-(5-phospho-beta-D-ribosyl)imidazole + S-adenosyl-L-methionine = 4-amino-2-methyl-5-(phosphooxymethyl)pyrimidine + CO + 5'-deoxyadenosine + formate + L-methionine + 3 H(+). Its pathway is cofactor biosynthesis; thiamine diphosphate biosynthesis. Functionally, catalyzes the synthesis of the hydroxymethylpyrimidine phosphate (HMP-P) moiety of thiamine from aminoimidazole ribotide (AIR) in a radical S-adenosyl-L-methionine (SAM)-dependent reaction. This is Phosphomethylpyrimidine synthase from Clostridium perfringens (strain SM101 / Type A).